The following is a 182-amino-acid chain: Large ribosomal subunit protein uL5c (182 aa).

This sequence belongs to the universal ribosomal protein uL5 family. In terms of assembly, part of the 50S ribosomal subunit; contacts the 5S rRNA.

It is found in the plastid. The protein localises to the chloroplast. In terms of biological role, binds 5S rRNA, forms part of the central protuberance of the 50S subunit. This is Large ribosomal subunit protein uL5c (rpl5) from Cyanidium caldarium (Red alga).